Here is a 131-residue protein sequence, read N- to C-terminus: Histone H2B.2 (131 aa).

A compositionally biased stretch (basic and acidic residues) spans 1 to 20 (MAPPKAEKKPASKAPAEKKP). Positions 1–39 (MAPPKAEKKPASKAPAEKKPAAKKTASSTDAKKRTKTRK) are disordered. Residues Lys-8 and Lys-9 each carry the N6-acetyllysine; alternate modification. Glycyl lysine isopeptide (Lys-Gly) (interchain with G-Cter in SUMO); alternate cross-links involve residues Lys-8 and Lys-9. The residue at position 12 (Ser-12) is a Phosphoserine. The residue at position 13 (Lys-13) is an N6-acetyllysine. Residue Lys-18 is modified to N6-acetyllysine; alternate. Residue Lys-18 forms a Glycyl lysine isopeptide (Lys-Gly) (interchain with G-Cter in SUMO); alternate linkage. Lys-19 participates in a covalent cross-link: Glycyl lysine isopeptide (Lys-Gly) (interchain with G-Cter in SUMO). Lys-125 participates in a covalent cross-link: Glycyl lysine isopeptide (Lys-Gly) (interchain with G-Cter in ubiquitin).

The protein belongs to the histone H2B family. In terms of assembly, the nucleosome is a histone octamer containing two molecules each of H2A, H2B, H3 and H4 assembled in one H3-H4 heterotetramer and two H2A-H2B heterodimers. The octamer wraps approximately 147 bp of DNA. Post-translationally, monoubiquitinated to form H2BK123ub1. H2BK123ub1 gives a specific tag for epigenetic transcriptional activation and is also prerequisite for H3K4me and H3K79me formation. H2BK123ub1 also modulates the formation of double-strand breaks during meiosis and is a prerequisite for DNA-damage checkpoint activation. In terms of processing, phosphorylated by STE20 to form H2BS10ph during progression through meiotic prophase. May be correlated with chromosome condensation. Acetylated by GCN5 to form H2BK11ac and H2BK16ac. H2BK16ac can also be formed by ESA1. Acetylation of N-terminal lysines and particularly formation of H2BK11acK16ac has a positive effect on transcription. Post-translationally, sumoylation to form H2BK6su or H2BK7su, and probably also H2BK16su or H2BK17su, occurs preferentially near the telomeres and represses gene transcription.

It is found in the nucleus. It localises to the chromosome. Functionally, core component of nucleosome. Nucleosomes wrap and compact DNA into chromatin, limiting DNA accessibility to the cellular machineries which require DNA as a template. Histones thereby play a central role in transcription regulation, DNA repair, DNA replication and chromosomal stability. DNA accessibility is regulated via a complex set of post-translational modifications of histones, also called histone code, and nucleosome remodeling. In Scheffersomyces stipitis (strain ATCC 58785 / CBS 6054 / NBRC 10063 / NRRL Y-11545) (Yeast), this protein is Histone H2B.2 (HTB2).